A 317-amino-acid chain; its full sequence is tRNA dimethylallyltransferase (317 aa).

G19–S26 provides a ligand contact to ATP. Substrate is bound at residue T21–S26. The tract at residues D44–Q47 is interaction with substrate tRNA.

It belongs to the IPP transferase family. In terms of assembly, monomer. Mg(2+) is required as a cofactor.

The enzyme catalyses adenosine(37) in tRNA + dimethylallyl diphosphate = N(6)-dimethylallyladenosine(37) in tRNA + diphosphate. Catalyzes the transfer of a dimethylallyl group onto the adenine at position 37 in tRNAs that read codons beginning with uridine, leading to the formation of N6-(dimethylallyl)adenosine (i(6)A). The sequence is that of tRNA dimethylallyltransferase from Methylorubrum extorquens (strain PA1) (Methylobacterium extorquens).